A 699-amino-acid chain; its full sequence is Large T antigen (699 aa).

Position 1 is an N-acetylmethionine; by host (Met-1). The J domain maps to 12–75 (ELMDLLGLER…VKVAHQPDFG (64 aa)). Positions 105–109 (LFCHE) match the LXCXE motif motif. 3 positions are modified to phosphoserine; by host: Ser-114, Ser-122, and Ser-125. Positions 115–137 (DEEGTADSQHSTPPKKKRKVEDP) are disordered. Thr-126 is modified (phosphothreonine; by host). Residues 127-134 (PPKKKRKV) carry the Nuclear localization signal motif. The segment at residues 141–256 (PPDLHAFLSQ…EESIQGGLKE (116 aa)) is a DNA-binding region (T-ag OBD). The T-ag D1-type zinc-finger motif lies at 267–359 (TKQVSWKLIT…KRVDTLHMTR (93 aa)). Residues Cys-304, Cys-307, His-315, and His-319 each coordinate Zn(2+). In terms of domain architecture, SF3 helicase spans 402-562 (KMDTLIYDFL…IYLRKALNNS (161 aa)). 428–435 (GPIDSGKT) is a binding site for ATP. Positions 637–678 (ETEDSGHGSSTESQSQCFSQASDTSGSADAPASQTPDPYDHD) are disordered. Residues 643 to 672 (HGSSTESQSQCFSQASDTSGSADAPASQTP) show a composition bias toward polar residues. The residue at position 661 (Ser-661) is a Phosphoserine; by host. At Lys-691 the chain carries N6-acetyllysine; by host. Thr-695 carries the post-translational modification Phosphothreonine; by host.

In terms of assembly, forms homohexamers in the presence of ATP. Interacts with host HDAC1. Interacts (via LXCXE domain) with host RB1; the interaction induces the aberrant dissociation of RB1-E2F1 complex thereby disrupting RB1's activity. Interacts (via LXCXE domain) with host pRB-related proteins RBL1 and RBL2. Interacts (via C-terminus) with host TOP1 and POLA1 allowing DNA replication. Interacts with host TP53, inhibiting TP53 binding to DNA. Interacts with host preinitiation complex components TBP, TFIIA and TFIID to regulate transcription initiation. Mg(2+) serves as cofactor. In terms of processing, phosphorylated on both serine and threonine residues. Small t antigen inhibits the dephosphorylation by the AC form of PP2A. Post-translationally, O-Glycosylated near the C-terminal region. Acetylated by CBP in a TP53-dependent manner.

The protein localises to the host nucleus. It catalyses the reaction Couples ATP hydrolysis with the unwinding of duplex DNA by translocating in the 3'-5' direction.. The enzyme catalyses ATP + H2O = ADP + phosphate + H(+). Its function is as follows. Isoform large T antigen is a key early protein essential for both driving viral replication and inducing cellular transformation. Plays a role in viral genome replication by driving entry of quiescent cells into the cell cycle and by autoregulating the synthesis of viral early mRNA. Displays highly oncogenic activities by corrupting the host cellular checkpoint mechanisms that guard cell division and the transcription, replication, and repair of DNA. Participates in the modulation of cellular gene expression preceeding viral DNA replication. This step involves binding to host key cell cycle regulators retinoblastoma protein RB1/pRb and TP53. Induces the disassembly of host E2F1 transcription factors from RB1, thus promoting transcriptional activation of E2F1-regulated S-phase genes. Inhibits host TP53 binding to DNA, abrogating the ability of TP53 to stimulate gene expression. Plays the role of a TFIID-associated factor (TAF) in transcription initiation for all three RNA polymerases, by stabilizing the TBP-TFIIA complex on promoters. Initiates viral DNA replication and unwinding via interactions with the viral origin of replication. Binds two adjacent sites in the SV40 origin. The replication fork movement is facilitated by Large T antigen helicase activity. Has processive 3'-5' DNA helicase activity which requires a short 3' single-stranded region and ATP. Activates the transcription of viral late mRNA, through host TBP and TFIIA stabilization. Interferes with histone deacetylation mediated by HDAC1, leading to activation of transcription. This chain is Large T antigen, found in Papio hamadryas ursinus (Chacma baboon).